The following is a 207-amino-acid chain: Protein-L-isoaspartate O-methyltransferase (207 aa).

Residue S56 is part of the active site.

The protein belongs to the methyltransferase superfamily. L-isoaspartyl/D-aspartyl protein methyltransferase family.

The protein localises to the cytoplasm. The enzyme catalyses [protein]-L-isoaspartate + S-adenosyl-L-methionine = [protein]-L-isoaspartate alpha-methyl ester + S-adenosyl-L-homocysteine. In terms of biological role, catalyzes the methyl esterification of L-isoaspartyl residues in peptides and proteins that result from spontaneous decomposition of normal L-aspartyl and L-asparaginyl residues. It plays a role in the repair and/or degradation of damaged proteins. This Pyrobaculum islandicum (strain DSM 4184 / JCM 9189 / GEO3) protein is Protein-L-isoaspartate O-methyltransferase.